The primary structure comprises 712 residues: Elongation factor G (712 aa).

The region spanning 8-290 (TRYRNIGISA…AVIEFLPSPT (283 aa)) is the tr-type G domain. GTP-binding positions include 17-24 (AHIDAGKT), 88-92 (DTPGH), and 142-145 (NKMD).

Belongs to the TRAFAC class translation factor GTPase superfamily. Classic translation factor GTPase family. EF-G/EF-2 subfamily.

The protein localises to the cytoplasm. Its function is as follows. Catalyzes the GTP-dependent ribosomal translocation step during translation elongation. During this step, the ribosome changes from the pre-translocational (PRE) to the post-translocational (POST) state as the newly formed A-site-bound peptidyl-tRNA and P-site-bound deacylated tRNA move to the P and E sites, respectively. Catalyzes the coordinated movement of the two tRNA molecules, the mRNA and conformational changes in the ribosome. In Acinetobacter baumannii (strain AB0057), this protein is Elongation factor G.